The primary structure comprises 458 residues: ATP synthase subunit beta (458 aa).

148 to 155 (GGAGVGKT) lines the ATP pocket.

It belongs to the ATPase alpha/beta chains family. F-type ATPases have 2 components, CF(1) - the catalytic core - and CF(0) - the membrane proton channel. CF(1) has five subunits: alpha(3), beta(3), gamma(1), delta(1), epsilon(1). CF(0) has three main subunits: a(1), b(2) and c(9-12). The alpha and beta chains form an alternating ring which encloses part of the gamma chain. CF(1) is attached to CF(0) by a central stalk formed by the gamma and epsilon chains, while a peripheral stalk is formed by the delta and b chains.

It is found in the cell inner membrane. It carries out the reaction ATP + H2O + 4 H(+)(in) = ADP + phosphate + 5 H(+)(out). Functionally, produces ATP from ADP in the presence of a proton gradient across the membrane. The catalytic sites are hosted primarily by the beta subunits. This Shewanella halifaxensis (strain HAW-EB4) protein is ATP synthase subunit beta.